Reading from the N-terminus, the 60-residue chain is Metallothionein A (60 aa).

Residues M1–C28 are beta. Positions 4, 6, 12, 14, 18, 20, 23, 25, 28, 32, 33, 35, 36, 40, 43, 47, 49, 54, 58, and 59 each coordinate a divalent metal cation. The tract at residues K29–Q60 is alpha.

The protein belongs to the metallothionein superfamily. Type 1 family.

Metallothioneins have a high content of cysteine residues that bind various heavy metals. In Trematomus bernacchii (Emerald rockcod), this protein is Metallothionein A (mta).